The sequence spans 140 residues: Large ribosomal subunit protein mL43 (140 aa).

It belongs to the mitochondrion-specific ribosomal protein mL43 family. In terms of assembly, component of the mitochondrial large ribosomal subunit (mt-LSU). Mature yeast 74S mitochondrial ribosomes consist of a small (37S) and a large (54S) subunit. The 37S small subunit contains a 15S ribosomal RNA (15S mt-rRNA) and 34 different proteins. The 54S large subunit contains a 21S rRNA (21S mt-rRNA) and 46 different proteins.

The protein resides in the mitochondrion. Component of the mitochondrial ribosome (mitoribosome), a dedicated translation machinery responsible for the synthesis of mitochondrial genome-encoded proteins, including at least some of the essential transmembrane subunits of the mitochondrial respiratory chain. The mitoribosomes are attached to the mitochondrial inner membrane and translation products are cotranslationally integrated into the membrane. Also has an extraribosomal function, being essential for mitochondrial genome integrity. May interact with MHR1 to take part in the mtDNA repair mechanism. This chain is Large ribosomal subunit protein mL43 (MRPL51), found in Saccharomyces cerevisiae (strain ATCC 204508 / S288c) (Baker's yeast).